The sequence spans 151 residues: 3-hydroxyacyl-[acyl-carrier-protein] dehydratase FabZ (151 aa).

H54 is an active-site residue.

This sequence belongs to the thioester dehydratase family. FabZ subfamily.

The protein resides in the cytoplasm. The catalysed reaction is a (3R)-hydroxyacyl-[ACP] = a (2E)-enoyl-[ACP] + H2O. In terms of biological role, involved in unsaturated fatty acids biosynthesis. Catalyzes the dehydration of short chain beta-hydroxyacyl-ACPs and long chain saturated and unsaturated beta-hydroxyacyl-ACPs. The sequence is that of 3-hydroxyacyl-[acyl-carrier-protein] dehydratase FabZ from Salmonella agona (strain SL483).